Reading from the N-terminus, the 67-residue chain is Small ribosomal subunit protein eS17 (67 aa).

The protein belongs to the eukaryotic ribosomal protein eS17 family. Part of the 30S ribosomal subunit.

The chain is Small ribosomal subunit protein eS17 from Pyrococcus furiosus (strain ATCC 43587 / DSM 3638 / JCM 8422 / Vc1).